We begin with the raw amino-acid sequence, 157 residues long: Ribosome maturation factor RimP (157 aa).

The protein belongs to the RimP family.

The protein resides in the cytoplasm. Its function is as follows. Required for maturation of 30S ribosomal subunits. The polypeptide is Ribosome maturation factor RimP (Lactococcus lactis subsp. cremoris (strain MG1363)).